We begin with the raw amino-acid sequence, 101 residues long: NAD(P)H-quinone oxidoreductase subunit 4L, chloroplastic (101 aa).

3 helical membrane-spanning segments follow: residues methionine 2–isoleucine 22, methionine 32–phenylalanine 52, and isoleucine 61–valine 81.

It belongs to the complex I subunit 4L family. As to quaternary structure, NDH is composed of at least 16 different subunits, 5 of which are encoded in the nucleus.

It is found in the plastid. Its subcellular location is the chloroplast thylakoid membrane. It catalyses the reaction a plastoquinone + NADH + (n+1) H(+)(in) = a plastoquinol + NAD(+) + n H(+)(out). The catalysed reaction is a plastoquinone + NADPH + (n+1) H(+)(in) = a plastoquinol + NADP(+) + n H(+)(out). Its function is as follows. NDH shuttles electrons from NAD(P)H:plastoquinone, via FMN and iron-sulfur (Fe-S) centers, to quinones in the photosynthetic chain and possibly in a chloroplast respiratory chain. The immediate electron acceptor for the enzyme in this species is believed to be plastoquinone. Couples the redox reaction to proton translocation, and thus conserves the redox energy in a proton gradient. In Populus trichocarpa (Western balsam poplar), this protein is NAD(P)H-quinone oxidoreductase subunit 4L, chloroplastic.